A 592-amino-acid chain; its full sequence is Autophagy-related protein 22-1 (592 aa).

A run of 4 helical transmembrane segments spans residues 31-51 (YGWAAEVFVVCAMGSFLPITL), 108-128 (TASFALYTFSLSVLVQAVIII), 143-163 (LLIVFAFIGSIATMLFLVVVP), and 167-187 (LLGGLLAIISNTCFGASFVLL). The N-linked (GlcNAc...) asparagine glycan is linked to Asn213. 8 helical membrane passes run 271 to 291 (IGIGYIGAVILQVISILVVVV), 301 to 321 (LVLFLIGLWWFVFTIPASLWL), 364 to 384 (IVIFLAAWFLLSDGIATVSGT), 398 to 418 (AALGLINVIVMLAGVFGAFSW), 433 to 453 (IIACIILFELIPLYGLLGFIP), 468 to 490 (MYPLGALYGLVMGGLSSYCRSFF), 502 to 524 (FYALYAITDKGSSIFGPAIVGAI), and 534 to 554 (AFVFLAVLIFVPLPLMLLVDV). Residues 572-592 (PQGSEYGAISDDQTTEDPIEE) are disordered.

The protein belongs to the ATG22 family.

Its subcellular location is the vacuole membrane. Functionally, vacuolar effluxer which mediate the efflux of amino acids resulting from autophagic degradation. The release of autophagic amino acids allows the maintenance of protein synthesis and viability during nitrogen starvation. The chain is Autophagy-related protein 22-1 (atg22-1) from Penicillium rubens (strain ATCC 28089 / DSM 1075 / NRRL 1951 / Wisconsin 54-1255) (Penicillium chrysogenum).